A 608-amino-acid chain; its full sequence is UvrABC system protein C (608 aa).

The GIY-YIG domain occupies 13 to 91 (HDPGVYRMFD…IKTFQPRYNV (79 aa)). The UVR domain occupies 201 to 236 (QQVLDHLIAKMETASRALDFENAARFRDQIQAVRAV).

This sequence belongs to the UvrC family. As to quaternary structure, interacts with UvrB in an incision complex.

It localises to the cytoplasm. Its function is as follows. The UvrABC repair system catalyzes the recognition and processing of DNA lesions. UvrC both incises the 5' and 3' sides of the lesion. The N-terminal half is responsible for the 3' incision and the C-terminal half is responsible for the 5' incision. The chain is UvrABC system protein C from Actinobacillus succinogenes (strain ATCC 55618 / DSM 22257 / CCUG 43843 / 130Z).